Here is a 72-residue protein sequence, read N- to C-terminus: Translation initiation factor IF-1 2 (72 aa).

Residues 1 to 72 form the S1-like domain; that stretch reads MAKEDTIQMQ…SRARIVFRAK (72 aa).

The protein belongs to the IF-1 family. As to quaternary structure, component of the 30S ribosomal translation pre-initiation complex which assembles on the 30S ribosome in the order IF-2 and IF-3, IF-1 and N-formylmethionyl-tRNA(fMet); mRNA recruitment can occur at any time during PIC assembly.

It is found in the cytoplasm. In terms of biological role, one of the essential components for the initiation of protein synthesis. Stabilizes the binding of IF-2 and IF-3 on the 30S subunit to which N-formylmethionyl-tRNA(fMet) subsequently binds. Helps modulate mRNA selection, yielding the 30S pre-initiation complex (PIC). Upon addition of the 50S ribosomal subunit IF-1, IF-2 and IF-3 are released leaving the mature 70S translation initiation complex. The sequence is that of Translation initiation factor IF-1 2 from Chromobacterium violaceum (strain ATCC 12472 / DSM 30191 / JCM 1249 / CCUG 213 / NBRC 12614 / NCIMB 9131 / NCTC 9757 / MK).